Here is a 162-residue protein sequence, read N- to C-terminus: Peroxiredoxin-2 (162 aa).

One can recognise a Thioredoxin domain in the interval 4-162 (IAVGDVLPDG…SSADDILKDL (159 aa)). Residue Cys-51 is the Cysteine sulfenic acid (-SOH) intermediate of the active site.

The protein belongs to the peroxiredoxin family. Prx5 subfamily. As to quaternary structure, monomer. Homodimer. Glutathionylation of C(P) causes the dimer to dissociate. Subsequent reduction of the mixed disulfide bond leads again to dimerization.

The enzyme catalyses [glutaredoxin]-dithiol + a hydroperoxide = [glutaredoxin]-disulfide + an alcohol + H2O. In terms of biological role, thiol-specific peroxidase that catalyzes the reduction of hydrogen peroxide and organic hydroperoxides to water and alcohols, respectively. Can reduce H(2)O(2) and short chain organic, fatty acid, and phospholipid hydroperoxides. Plays a role in cell protection against oxidative stress by detoxifying peroxides. The polypeptide is Peroxiredoxin-2 (Populus trichocarpa (Western balsam poplar)).